Reading from the N-terminus, the 189-residue chain is Nucleoside diphosphate kinase 6 (189 aa).

The ATP site is built by Lys19, Phe68, Arg96, Thr102, Arg116, and Asn126. The active-site Pros-phosphohistidine intermediate is the His129.

This sequence belongs to the NDK family. It depends on Mg(2+) as a cofactor.

The catalysed reaction is a 2'-deoxyribonucleoside 5'-diphosphate + ATP = a 2'-deoxyribonucleoside 5'-triphosphate + ADP. The enzyme catalyses a ribonucleoside 5'-diphosphate + ATP = a ribonucleoside 5'-triphosphate + ADP. Its function is as follows. Major role in the synthesis of nucleoside triphosphates other than ATP. The ATP gamma phosphate is transferred to the NDP beta phosphate via a ping-pong mechanism, using a phosphorylated active-site intermediate. In Mus musculus (Mouse), this protein is Nucleoside diphosphate kinase 6 (Nme6).